The following is a 543-amino-acid chain: Thermosome subunit beta (543 aa).

A disordered region spans residues 522–543 (TKSSSSSSNPPKSGSSSESSED). The span at 523–543 (KSSSSSSNPPKSGSSSESSED) shows a compositional bias: low complexity.

The protein belongs to the TCP-1 chaperonin family. Forms a Heterooligomeric complex of two stacked eight-membered rings. In terms of processing, the N-terminus is blocked.

Its function is as follows. Molecular chaperone; binds unfolded polypeptides in vitro, and has a weak ATPase activity. This chain is Thermosome subunit beta (thsB), found in Thermoplasma acidophilum (strain ATCC 25905 / DSM 1728 / JCM 9062 / NBRC 15155 / AMRC-C165).